We begin with the raw amino-acid sequence, 346 residues long: Serpentine receptor class beta-11 (346 aa).

7 helical membrane-spanning segments follow: residues 26–46, 57–77, 102–122, 139–159, 186–206, 239–259, and 278–298; these read YQMIISFCSVFPLIYFLLFKL, TIFISYFVSLVAFSMTHLTTS, IWNFFILFFLTLSTFFPCSVT, SVVMGPILVGFNVLLNFCIIF, FTFFIIIFFVNLVDVIFDLIL, VFLILIHIISFGIYVSAVVFF, and TFSTTIVPTYNFVIGSFSSFF.

The protein belongs to the nematode receptor-like protein srb family.

Its subcellular location is the membrane. The protein is Serpentine receptor class beta-11 (srb-11) of Caenorhabditis elegans.